The primary structure comprises 249 residues: Chromosome segregation and cytokinesis defective protein 1 (249 aa).

A coiled-coil region spans residues 12–48; sequence VVAMADTLETRVKDLLEEYKKKLREVALQTAKAESDR. 3 disordered regions span residues 70–89, 94–183, and 208–249; these read PDDF…AAVA, LPSE…PEKP, and TTAT…GTSV. Residues 73–85 are compositionally biased toward acidic residues; sequence FYIESGEEEEEGE. Positions 109 to 126 are enriched in polar residues; it reads QKTSIPIGQNSGRNTVQV. The span at 224-236 shows a compositional bias: low complexity; that stretch reads SGAASKKAAAAAG.

Belongs to the borealin family. Highly divergent. In terms of assembly, component of the CPC complex which consists of icp-1; csc-1; bir-1 and air-2. Within the complex interacts with Aurora B/air-2, bir-1 and icp-1.

The protein localises to the nucleus. The protein resides in the chromosome. Its subcellular location is the centromere. It is found in the cytoplasm. It localises to the cytoskeleton. The protein localises to the spindle. Functionally, component of the chromosomal passenger complex (CPC), a complex that acts as a key regulator of chromosome segregation and cytokinesis during mitosis. The CPC complex has essential functions at the centromere in ensuring correct chromosome alignment and segregation. In the complex, it may be required to direct the Aurora B/air-2 to centromeric DNA. This is Chromosome segregation and cytokinesis defective protein 1 (csc-1) from Caenorhabditis elegans.